A 144-amino-acid chain; its full sequence is Prefoldin subunit alpha (144 aa).

It belongs to the prefoldin alpha subunit family. Heterohexamer of two alpha and four beta subunits.

The protein resides in the cytoplasm. Molecular chaperone capable of stabilizing a range of proteins. Seems to fulfill an ATP-independent, HSP70-like function in archaeal de novo protein folding. This chain is Prefoldin subunit alpha, found in Methanococcus maripaludis (strain C5 / ATCC BAA-1333).